The following is a 383-amino-acid chain: Vesicle-associated membrane protein-associated protein scs2 (383 aa).

One can recognise an MSP domain in the interval 1–123; it reads MSVECSGELF…SIFDRKIRCV (123 aa). Residues 1–362 lie on the Cytoplasmic side of the membrane; it reads MSVECSGELF…TGASLTESPG (362 aa). Positions 127 to 146 are enriched in polar residues; sequence KQPPQSADKQVENTSTSNPP. Disordered stretches follow at residues 127-160 and 233-359; these read KQPP…SSVG and ESAS…SLTE. 5 positions are modified to phosphoserine: serine 236, serine 237, serine 259, serine 261, and serine 268. Over residues 241–263 the composition is skewed to basic and acidic residues; that stretch reads DVARSKVQDIIDNEIPKPSESPR. A compositionally biased stretch (basic and acidic residues) spans 289-300; that stretch reads FDTKKNDFDSKL. The span at 347–359 shows a compositional bias: polar residues; sequence ADPSSSTGASLTE. A helical; Anchor for type IV membrane protein transmembrane segment spans residues 363-383; it reads IPPNIVIILCLIFFLIGYLFF.

This sequence belongs to the VAMP-associated protein (VAP) (TC 9.B.17) family. Interacts (via MSP domain) with duc1 (via FFAT-motif); the interaction is direct and serves to restrict the localization of duc1 to areas of cell membrane-endoplasmic reticulum contact sites, and away from the cell division site. Interacts with epr1.

It localises to the endoplasmic reticulum membrane. Vesicle-associated membrane protein-associated protein (VAP) implicated in maintaining the cortical endoplasmic reticulum (ER)-plasma membrane (PM) attachment. ER-PM contacts function to modulate the distribution of contractile ring components to ensure robust ring assembly. ER-PM contacts function also in controlling exocytosis and maintenance of cell polarity regulating cell shape. VAPs play an important role in regulating eisosome assembly. VAPs also contribute to ER-phagy by tethering atg8 to the ER membrane, but also by maintaining the ER-plasma membrane contact. Restricts the localization of duc1 away from the site of cell division. The protein is Vesicle-associated membrane protein-associated protein scs2 (scs2) of Schizosaccharomyces pombe (strain 972 / ATCC 24843) (Fission yeast).